The sequence spans 214 residues: Probable transaldolase (214 aa).

Residue Lys83 is the Schiff-base intermediate with substrate of the active site.

It belongs to the transaldolase family. Type 3B subfamily.

It is found in the cytoplasm. The enzyme catalyses D-sedoheptulose 7-phosphate + D-glyceraldehyde 3-phosphate = D-erythrose 4-phosphate + beta-D-fructose 6-phosphate. Its pathway is carbohydrate degradation; pentose phosphate pathway; D-glyceraldehyde 3-phosphate and beta-D-fructose 6-phosphate from D-ribose 5-phosphate and D-xylulose 5-phosphate (non-oxidative stage): step 2/3. Its function is as follows. Transaldolase is important for the balance of metabolites in the pentose-phosphate pathway. The sequence is that of Probable transaldolase from Streptococcus pyogenes serotype M2 (strain MGAS10270).